The chain runs to 370 residues: Putative agmatine deiminase (370 aa).

The active-site Amidino-cysteine intermediate is Cys-361.

It belongs to the agmatine deiminase family.

The catalysed reaction is agmatine + H2O = N-carbamoylputrescine + NH4(+). The protein is Putative agmatine deiminase of Shewanella baltica (strain OS185).